A 271-amino-acid polypeptide reads, in one-letter code: Sulfur carrier protein FdhD (271 aa).

Cys114 serves as the catalytic Cysteine persulfide intermediate.

The protein belongs to the FdhD family.

It is found in the cytoplasm. In terms of biological role, required for formate dehydrogenase (FDH) activity. Acts as a sulfur carrier protein that transfers sulfur from IscS to the molybdenum cofactor prior to its insertion into FDH. This is Sulfur carrier protein FdhD from Agrobacterium fabrum (strain C58 / ATCC 33970) (Agrobacterium tumefaciens (strain C58)).